The sequence spans 743 residues: UvrABC system protein C (743 aa).

The 80-residue stretch at 16 to 95 (VDPGVYKFRD…IKEFDPRFNV (80 aa)) folds into the GIY-YIG domain. The 36-residue stretch at 208-243 (DKLVRQLEARMQQASEELDFETAARLRDDVGALRRA) folds into the UVR domain. 2 disordered regions span residues 497–543 (AEAA…QTGR) and 694–743 (PSAD…TGVE). The span at 506 to 520 (QASDTDGDQVSDTDG) shows a compositional bias: acidic residues. A compositionally biased stretch (polar residues) spans 734-743 (QSASQRTGVE).

This sequence belongs to the UvrC family. As to quaternary structure, interacts with UvrB in an incision complex.

The protein resides in the cytoplasm. Functionally, the UvrABC repair system catalyzes the recognition and processing of DNA lesions. UvrC both incises the 5' and 3' sides of the lesion. The N-terminal half is responsible for the 3' incision and the C-terminal half is responsible for the 5' incision. This Rhodococcus opacus (strain B4) protein is UvrABC system protein C.